The sequence spans 65 residues: Large ribosomal subunit protein bL35 (65 aa).

Positions Met1–Ala10 are enriched in basic and acidic residues. The segment at Met1–Cys24 is disordered.

This sequence belongs to the bacterial ribosomal protein bL35 family.

In Tolumonas auensis (strain DSM 9187 / NBRC 110442 / TA 4), this protein is Large ribosomal subunit protein bL35.